We begin with the raw amino-acid sequence, 240 residues long: U1 small nuclear ribonucleoprotein C (240 aa).

A Matrin-type zinc finger spans residues Tyr4–Glu36. Disordered stretches follow at residues Gly86–His122 and Ile175–Ala240. Composition is skewed to basic and acidic residues over residues Asp178 to Ile194 and Asp203 to His219. A compositionally biased stretch (polar residues) spans Thr226 to Ala240.

This sequence belongs to the U1 small nuclear ribonucleoprotein C family. U1 snRNP is composed of the 7 core Sm proteins B/B', D1, D2, D3, E, F and G that assemble in a heptameric protein ring on the Sm site of the small nuclear RNA to form the core snRNP, and at least 3 U1 snRNP-specific proteins U1-70K, U1-A and U1-C. U1-C interacts with U1 snRNA and the 5' splice-site region of the pre-mRNA.

The protein localises to the nucleus. Functionally, component of the spliceosomal U1 snRNP, which is essential for recognition of the pre-mRNA 5' splice-site and the subsequent assembly of the spliceosome. U1-C is directly involved in initial 5' splice-site recognition for both constitutive and regulated alternative splicing. The interaction with the 5' splice-site seems to precede base-pairing between the pre-mRNA and the U1 snRNA. Stimulates commitment or early (E) complex formation by stabilizing the base pairing of the 5' end of the U1 snRNA and the 5' splice-site region. In Plasmodium vivax (strain Salvador I), this protein is U1 small nuclear ribonucleoprotein C.